The chain runs to 149 residues: Deoxyuridine 5'-triphosphate nucleotidohydrolase (149 aa).

Substrate-binding positions include arginine 68–glycine 70, asparagine 81, leucine 85–aspartate 87, and methionine 95.

This sequence belongs to the dUTPase family. Mg(2+) serves as cofactor.

It carries out the reaction dUTP + H2O = dUMP + diphosphate + H(+). The protein operates within pyrimidine metabolism; dUMP biosynthesis; dUMP from dCTP (dUTP route): step 2/2. This enzyme is involved in nucleotide metabolism: it produces dUMP, the immediate precursor of thymidine nucleotides and it decreases the intracellular concentration of dUTP so that uracil cannot be incorporated into DNA. The protein is Deoxyuridine 5'-triphosphate nucleotidohydrolase of Bordetella bronchiseptica (strain ATCC BAA-588 / NCTC 13252 / RB50) (Alcaligenes bronchisepticus).